Reading from the N-terminus, the 185-residue chain is Homeobox protein TGIF2LY (185 aa).

Disordered stretches follow at residues 1–58 and 166–185; these read MEAA…GNLP and RCQERSNQIRSRPLARSSPE. The segment covering 21–39 has biased composition (polar residues); it reads AKTQSPAQDTSIMSRNNAD. The segment at residues 48 to 111 is a DNA-binding region (homeobox; TALE-type); sequence EHKKKRKGNL…INARRRILPD (64 aa).

It belongs to the TALE/TGIF homeobox family. Specifically expressed in adult testis.

Its subcellular location is the nucleus. In terms of biological role, may have a transcription role in testis. May act as a competitor/regulator of TGIF2LX. The protein is Homeobox protein TGIF2LY (TGIF2LY) of Homo sapiens (Human).